Consider the following 301-residue polypeptide: MTEEFDTTGVCTGTWWSSSNGMFSGCSLPRSAEIVVDFGEIEWQNIDTLDAKTYNENYLSTSTFLGNANLDTTSQIYVSSPSNIHEEERYNQINSFLEGLFDSSEQLLVPNCPKPELFESFHFFDDVFPNESRMISVFDHQKPKEDMQACKSLTTCKRASEKSGELEDIESSQPLKRPRLETPSHFPSFKVRKEKLGDRITALQQLVSPFGKTDTASVLHDAIDYIKFLQEQITEKVSTSPHLNSIGSGEQKQWSDKSSNNTHNQNCSPRQDLRSRGLCLMPISSTFSTPPQHLDTSSLWN.

Residues 29 to 106 (PRSAEIVVDF…LEGLFDSSEQ (78 aa)) form the KRAB domain. Disordered stretches follow at residues 161–184 (EKSGELEDIESSQPLKRPRLETPS) and 239–272 (TSPHLNSIGSGEQKQWSDKSSNNTHNQNCSPRQD). Residues 180-229 (LETPSHFPSFKVRKEKLGDRITALQQLVSPFGKTDTASVLHDAIDYIKFL) form the bHLH domain. The segment covering 239–269 (TSPHLNSIGSGEQKQWSDKSSNNTHNQNCSP) has biased composition (polar residues).

Homodimer. Mature root endodermis.

It is found in the nucleus. The sequence is that of Transcription factor bHLH103 (BHLH103) from Arabidopsis thaliana (Mouse-ear cress).